Here is a 149-residue protein sequence, read N- to C-terminus: Protein SprT-like (149 aa).

Positions 4-143 (TDYVKQVSLE…CGLCRGKLLL (140 aa)) constitute a SprT-like domain. A Zn(2+)-binding site is contributed by histidine 64. Residue glutamate 65 is part of the active site. Histidine 68 lines the Zn(2+) pocket.

It belongs to the SprT family. Requires Zn(2+) as cofactor.

It localises to the cytoplasm. In Streptococcus pneumoniae (strain Taiwan19F-14), this protein is Protein SprT-like.